The primary structure comprises 1331 residues: ABC multidrug transporter MDR2 (1331 aa).

2 stretches are compositionally biased toward basic and acidic residues: residues 1-20 (MVEVSEKPNTQDDGVSKQEN) and 31-41 (SDKEKVAKKGN). The tract at residues 1–51 (MVEVSEKPNTQDDGVSKQENRNPASSSSSTSDKEKVAKKGNSDATKSSTPE) is disordered. A run of 4 helical transmembrane segments spans residues 93–113 (MIFLAIVSLASIAAGAALPLF), 147–167 (YFVYLGIAQFILLYVSTVGFI), 219–239 (KVGLTLTALSTFFSAFIIGYV), and 242–262 (WKLALICSSTIVAMILVMGGI). The ABC transmembrane type-1 1 domain maps to 97-387 (AIVSLASIAA…VAPNTQAFAS (291 aa)). Asn-293 carries an N-linked (GlcNAc...) asparagine glycan. The next 2 membrane-spanning stretches (helical) occupy residues 325–345 (LGIMFGSMMAIMYSNYGLGFW) and 358–378 (LSAIVNILLAIVIGSFSIGNV). The 246-residue stretch at 422-667 (IEFRGIKHIY…KGTYLQLVEA (246 aa)) folds into the ABC transporter 1 domain. Residue 457–464 (GPSGSGKS) coordinates ATP. Residue Asn-529 is glycosylated (N-linked (GlcNAc...) asparagine). 2 helical membrane passes run 762–782 (LCGFFFAVLSGAGQPVQSVFF) and 810–830 (FLMLGLVQLVTQSAQGVIFAI). In terms of domain architecture, ABC transmembrane type-1 2 spans 764–1051 (GFFFAVLSGA…VFSFSPDMGK (288 aa)). A glycan (N-linked (GlcNAc...) asparagine) is linked at Asn-860. A run of 4 helical transmembrane segments spans residues 884–904 (LGTILMVSTTLIVALTVALAF), 910–930 (LVCISTVPVLLLCGFYRFWIL), 995–1015 (ASQSFSFFCLALGFWYGGGLL), and 1025–1045 (FFLCISCVIFGSQSAGIVFSF). The ABC transporter 2 domain maps to 1086-1324 (IEFRDVHFRY…KGRYYELVHM (239 aa)). The N-linked (GlcNAc...) asparagine glycan is linked to Asn-1108. 1121-1128 (GPSGCGKS) contacts ATP.

Belongs to the ABC transporter superfamily. ABCB family. Multidrug resistance exporter (TC 3.A.1.201) subfamily.

It localises to the cell membrane. The enzyme catalyses itraconazole(in) + ATP + H2O = itraconazole(out) + ADP + phosphate + H(+). Pleiotropic ABC efflux transporter that may be involved in the modulation susceptibility to a wide range of unrelated cytotoxic compounds, including terbinafine, 4-nitroquinoline N-oxide, and ethidium bromide. May play a role in pathogenicity. This Trichophyton interdigitale (strain MR816) protein is ABC multidrug transporter MDR2.